The primary structure comprises 185 residues: Small ribosomal subunit protein uS4c (185 aa).

The region spanning 72 to 134 is the S4 RNA-binding domain; sequence MRLDNVIFRL…PTSCNALKGE (63 aa). The interval 132 to 154 is disordered; it reads KGESPGGGETPDHLTASLSEGSR.

Belongs to the universal ribosomal protein uS4 family. Part of the 30S ribosomal subunit. Contacts protein S5. The interaction surface between S4 and S5 is involved in control of translational fidelity.

Its subcellular location is the plastid. It localises to the chloroplast. In terms of biological role, one of the primary rRNA binding proteins, it binds directly to 16S rRNA where it nucleates assembly of the body of the 30S subunit. With S5 and S12 plays an important role in translational accuracy. This Woodwardia unigemmata (Chainfern) protein is Small ribosomal subunit protein uS4c (rps4).